The sequence spans 235 residues: Cell division protein FtsQ (235 aa).

Over 1-6 the chain is Cytoplasmic; sequence MERLTR. Residues 7-25 traverse the membrane as a helical segment; the sequence is WLLVMMAMLLAASGLVWFY. Residues 26–235 lie on the Periplasmic side of the membrane; the sequence is NSNHLPVKQV…DGLPEKESEE (210 aa). In terms of domain architecture, POTRA spans 30 to 99; that stretch reads LPVKQVSLKG…DTVEVVLTER (70 aa).

The protein belongs to the FtsQ/DivIB family. FtsQ subfamily. As to quaternary structure, part of a complex composed of FtsB, FtsL and FtsQ.

It localises to the cell inner membrane. Essential cell division protein. May link together the upstream cell division proteins, which are predominantly cytoplasmic, with the downstream cell division proteins, which are predominantly periplasmic. May control correct divisome assembly. The polypeptide is Cell division protein FtsQ (Neisseria meningitidis serogroup B (strain ATCC BAA-335 / MC58)).